Reading from the N-terminus, the 549-residue chain is Oxygen-dependent choline dehydrogenase (549 aa).

An FAD-binding site is contributed by 4 to 33 (DFVIIGSGSAGSAMASRLSEDGKHTVIVLE). His-465 acts as the Proton acceptor in catalysis.

It belongs to the GMC oxidoreductase family. The cofactor is FAD.

It catalyses the reaction choline + A = betaine aldehyde + AH2. The catalysed reaction is betaine aldehyde + NAD(+) + H2O = glycine betaine + NADH + 2 H(+). The protein operates within amine and polyamine biosynthesis; betaine biosynthesis via choline pathway; betaine aldehyde from choline (cytochrome c reductase route): step 1/1. In terms of biological role, involved in the biosynthesis of the osmoprotectant glycine betaine. Catalyzes the oxidation of choline to betaine aldehyde and betaine aldehyde to glycine betaine at the same rate. This Rhizobium rhizogenes (strain K84 / ATCC BAA-868) (Agrobacterium radiobacter) protein is Oxygen-dependent choline dehydrogenase.